The sequence spans 382 residues: D-alanine--D-alanine ligase (382 aa).

The ATP-grasp domain maps to 161-372 (KVVFEAAGLQ…YAELIDELIY (212 aa)). 193–248 (VDRLGYPVFVKPARAGSSMGISKVDSLEGLDAAIAAAREHDLKLVIEAGIVGREIE) is a binding site for ATP. Mg(2+)-binding residues include D326, E339, and N341.

It belongs to the D-alanine--D-alanine ligase family. Mg(2+) serves as cofactor. Requires Mn(2+) as cofactor.

The protein resides in the cytoplasm. It catalyses the reaction 2 D-alanine + ATP = D-alanyl-D-alanine + ADP + phosphate + H(+). Its pathway is cell wall biogenesis; peptidoglycan biosynthesis. Functionally, cell wall formation. This is D-alanine--D-alanine ligase from Arthrobacter sp. (strain FB24).